We begin with the raw amino-acid sequence, 937 residues long: Bifunctional glutamine synthetase adenylyltransferase/adenylyl-removing enzyme (937 aa).

Residues 1-436 (MSQPIPSASP…AAEFAELLAP (436 aa)) form an adenylyl removase region. Residues 443–937 (PDTLADYWRA…QLRFQPGKGA (495 aa)) are adenylyl transferase.

This sequence belongs to the GlnE family. Mg(2+) serves as cofactor.

It catalyses the reaction [glutamine synthetase]-O(4)-(5'-adenylyl)-L-tyrosine + phosphate = [glutamine synthetase]-L-tyrosine + ADP. It carries out the reaction [glutamine synthetase]-L-tyrosine + ATP = [glutamine synthetase]-O(4)-(5'-adenylyl)-L-tyrosine + diphosphate. Involved in the regulation of glutamine synthetase GlnA, a key enzyme in the process to assimilate ammonia. When cellular nitrogen levels are high, the C-terminal adenylyl transferase (AT) inactivates GlnA by covalent transfer of an adenylyl group from ATP to specific tyrosine residue of GlnA, thus reducing its activity. Conversely, when nitrogen levels are low, the N-terminal adenylyl removase (AR) activates GlnA by removing the adenylyl group by phosphorolysis, increasing its activity. The regulatory region of GlnE binds the signal transduction protein PII (GlnB) which indicates the nitrogen status of the cell. This Xanthomonas campestris pv. campestris (strain B100) protein is Bifunctional glutamine synthetase adenylyltransferase/adenylyl-removing enzyme.